The sequence spans 383 residues: Fructose-1,6-bisphosphate aldolase/phosphatase (383 aa).

Aspartate 11 functions as the Proton acceptor; for FBP phosphatase activity in the catalytic mechanism. Aspartate 11, histidine 18, aspartate 52, and aspartate 53 together coordinate Mg(2+). Beta-D-fructose 1,6-bisphosphate is bound at residue histidine 18. Position 18 (histidine 18) interacts with dihydroxyacetone phosphate. Position 90 (tyrosine 90) interacts with beta-D-fructose 1,6-bisphosphate. Mg(2+) is bound at residue glutamine 94. Residue glycine 103–asparagine 104 participates in beta-D-fructose 1,6-bisphosphate binding. Position 131 (aspartate 131) interacts with Mg(2+). Lysine 132 is a binding site for beta-D-fructose 1,6-bisphosphate. Position 132 (lysine 132) interacts with dihydroxyacetone phosphate. Tyrosine 228 functions as the Proton donor/acceptor; for FBP aldolase activity in the catalytic mechanism. Positions 231, 232, and 233 each coordinate Mg(2+). The Schiff-base intermediate with DHAP; for FBP aldolase activity role is filled by lysine 231. Beta-D-fructose 1,6-bisphosphate is bound by residues glutamine 241–histidine 242, arginine 265, aspartate 286, and tyrosine 347. Dihydroxyacetone phosphate-binding residues include arginine 265 and aspartate 286. The tract at residues phenylalanine 361–aspartate 383 is disordered. The segment covering valine 374–aspartate 383 has biased composition (polar residues).

It belongs to the FBP aldolase/phosphatase family. Homooctamer; dimer of tetramers. The cofactor is Mg(2+).

It catalyses the reaction beta-D-fructose 1,6-bisphosphate + H2O = beta-D-fructose 6-phosphate + phosphate. It carries out the reaction beta-D-fructose 1,6-bisphosphate = D-glyceraldehyde 3-phosphate + dihydroxyacetone phosphate. Its pathway is carbohydrate biosynthesis; gluconeogenesis. Functionally, catalyzes two subsequent steps in gluconeogenesis: the aldol condensation of dihydroxyacetone phosphate (DHAP) and glyceraldehyde-3-phosphate (GA3P) to fructose-1,6-bisphosphate (FBP), and the dephosphorylation of FBP to fructose-6-phosphate (F6P). In Metallosphaera sedula (strain ATCC 51363 / DSM 5348 / JCM 9185 / NBRC 15509 / TH2), this protein is Fructose-1,6-bisphosphate aldolase/phosphatase.